Here is a 200-residue protein sequence, read N- to C-terminus: Holliday junction resolvase RecU (200 aa).

Residues Thr85, Asp87, Glu100, and Gln119 each coordinate Mg(2+).

Belongs to the RecU family. Mg(2+) serves as cofactor.

Its subcellular location is the cytoplasm. It catalyses the reaction Endonucleolytic cleavage at a junction such as a reciprocal single-stranded crossover between two homologous DNA duplexes (Holliday junction).. Functionally, endonuclease that resolves Holliday junction intermediates in genetic recombination. Cleaves mobile four-strand junctions by introducing symmetrical nicks in paired strands. Promotes annealing of linear ssDNA with homologous dsDNA. Required for DNA repair, homologous recombination and chromosome segregation. In Bacillus cytotoxicus (strain DSM 22905 / CIP 110041 / 391-98 / NVH 391-98), this protein is Holliday junction resolvase RecU.